Here is a 306-residue protein sequence, read N- to C-terminus: UDP-N-acetylenolpyruvoylglucosamine reductase (306 aa).

Residues Arg30–Arg216 enclose the FAD-binding PCMH-type domain. Arg180 is an active-site residue. Ser230 (proton donor) is an active-site residue. Glu301 is a catalytic residue.

The protein belongs to the MurB family. It depends on FAD as a cofactor.

The protein localises to the cytoplasm. It catalyses the reaction UDP-N-acetyl-alpha-D-muramate + NADP(+) = UDP-N-acetyl-3-O-(1-carboxyvinyl)-alpha-D-glucosamine + NADPH + H(+). It participates in cell wall biogenesis; peptidoglycan biosynthesis. In terms of biological role, cell wall formation. This chain is UDP-N-acetylenolpyruvoylglucosamine reductase, found in Petrotoga mobilis (strain DSM 10674 / SJ95).